The primary structure comprises 251 residues: Triosephosphate isomerase (251 aa).

9–11 (NWK) contributes to the substrate binding site. His-95 functions as the Electrophile in the catalytic mechanism. The active-site Proton acceptor is Glu-167. Residues Gly-173, Ser-212, and 233–234 (GG) each bind substrate.

It belongs to the triosephosphate isomerase family. As to quaternary structure, homodimer.

Its subcellular location is the cytoplasm. The catalysed reaction is D-glyceraldehyde 3-phosphate = dihydroxyacetone phosphate. Its pathway is carbohydrate biosynthesis; gluconeogenesis. It functions in the pathway carbohydrate degradation; glycolysis; D-glyceraldehyde 3-phosphate from glycerone phosphate: step 1/1. Functionally, involved in the gluconeogenesis. Catalyzes stereospecifically the conversion of dihydroxyacetone phosphate (DHAP) to D-glyceraldehyde-3-phosphate (G3P). This Pseudomonas savastanoi pv. phaseolicola (strain 1448A / Race 6) (Pseudomonas syringae pv. phaseolicola (strain 1448A / Race 6)) protein is Triosephosphate isomerase.